A 284-amino-acid chain; its full sequence is Para-Rep C3 (284 aa).

In terms of domain architecture, CRESS-DNA virus Rep endonuclease spans 3-98 (TVQSTCWVFT…IEGPWEYGKY (96 aa)). The short motif at 10 to 13 (VFTL) is the RCR-1 element. Glutamate 36 and histidine 42 together coordinate a divalent metal cation. The short motif at 42–44 (HLQ) is the RCR-2 element. A Nuclear localization signal motif is present at residues 51–71 (AQQSLGQMKAIIPGAHFEKMR). The active-site For DNA cleavage activity is tyrosine 81. The short motif at 81–84 (YAMK) is the RCR-3 element. Residue aspartate 86 participates in a divalent metal cation binding. A Nuclear localization signal motif is present at residues 98–104 (YIKKGSH). Position 174 to 182 (174 to 182 (GPKGGEGKS)) interacts with ATP.

It belongs to the nanoviridea/circoviridae replication-associated protein family. In terms of assembly, homooligomer (Potential). Rep binds to repeated DNA motifs (iterons). It depends on Mg(2+) as a cofactor. Requires Mn(2+) as cofactor.

The protein resides in the host nucleus. It carries out the reaction ATP + H2O = ADP + phosphate + H(+). Its function is as follows. Initiates and terminates the replication only of its own subviral DNA molecule. The closed circular ssDNA genome is first converted to a superhelical dsDNA. Rep binds a specific hairpin at the genome origin of replication. Introduces an endonucleolytic nick within the intergenic region of the genome, thereby initiating the rolling circle replication (RCR). Following cleavage, binds covalently to the 5'-phosphate of DNA as a tyrosyl ester. The cleavage gives rise to a free 3'-OH that serves as a primer for the cellular DNA polymerase. The polymerase synthesizes the (+) strand DNA by rolling circle mechanism. After one round of replication, a Rep-catalyzed nucleotidyl transfer reaction releases a circular single-stranded virus genome, thereby terminating the replication. Displays origin-specific DNA cleavage, nucleotidyl transferase, ATPase and helicase activities. The protein is Para-Rep C3 (C3) of Milk vetch dwarf C3 alphasatellite (MVDC3A).